Here is a 292-residue protein sequence, read N- to C-terminus: MERGPVVGAGLGAGARIQALLGCLLKVLLWVASALLYFGSEQAARLLGSPCLRRLYHAWLAAVVIFGPLLQFHVNPRTIFASHGNFFNIKFVNSAWGWTCTFLGGFVLLVVFLATRRVAVTARHLSRLVVGAAVWRGAGRAFLLIEDLTGSCFEPLPQGLLLHELPDRRSCLAAGHQWRGYTVSSHTFLLTFCCLLMAEEAAVFAKYLAHGLPAGAPLRLVFLLNVLLLGLWNFLLLCTVIYFHQYTHKVVGAAVGTFAWYLTYGSWYHQPWSPGSPGHGLFPRPHSSRKHN.

Residues 1-18 (MERGPVVGAGLGAGARIQ) lie on the Lumenal side of the membrane. The helical transmembrane segment at 19 to 39 (ALLGCLLKVLLWVASALLYFG) threads the bilayer. The Cytoplasmic segment spans residues 40–54 (SEQAARLLGSPCLRR). Residues 55 to 75 (LYHAWLAAVVIFGPLLQFHVN) form a helical membrane-spanning segment. Over 76-94 (PRTIFASHGNFFNIKFVNS) the chain is Lumenal. A helical transmembrane segment spans residues 95–115 (AWGWTCTFLGGFVLLVVFLAT). The Cytoplasmic segment spans residues 116-141 (RRVAVTARHLSRLVVGAAVWRGAGRA). The chain crosses the membrane as a helical span at residues 142–162 (FLLIEDLTGSCFEPLPQGLLL). Topologically, residues 163-187 (HELPDRRSCLAAGHQWRGYTVSSHT) are lumenal. Residue His186 is part of the active site. A helical membrane pass occupies residues 188 to 208 (FLLTFCCLLMAEEAAVFAKYL). Residues 209 to 220 (AHGLPAGAPLRL) lie on the Cytoplasmic side of the membrane. A helical transmembrane segment spans residues 221 to 241 (VFLLNVLLLGLWNFLLLCTVI). At 242-249 (YFHQYTHK) the chain is on the lumenal side. His244 is a catalytic residue. Residues 250–270 (VVGAAVGTFAWYLTYGSWYHQ) traverse the membrane as a helical segment. Topologically, residues 271 to 292 (PWSPGSPGHGLFPRPHSSRKHN) are cytoplasmic.

The protein belongs to the FIT family. FIT1 subfamily. Primarily expressed in heart and skeletal muscle.

It is found in the endoplasmic reticulum membrane. Its function is as follows. Plays an important role in the formation of lipid droplets (LDs) which are storage organelles at the center of lipid and energy homeostasis. Directly binds to diacylglycerol (DAGs) and triacylglycerol. In Homo sapiens (Human), this protein is Fat storage-inducing transmembrane protein 1.